Consider the following 201-residue polypeptide: Ribosomal RNA large subunit methyltransferase E (201 aa).

S-adenosyl-L-methionine is bound by residues Gly49, Trp51, Asp69, Asp87, and Asp111. Lys151 serves as the catalytic Proton acceptor.

The protein belongs to the class I-like SAM-binding methyltransferase superfamily. RNA methyltransferase RlmE family.

It is found in the cytoplasm. The catalysed reaction is uridine(2552) in 23S rRNA + S-adenosyl-L-methionine = 2'-O-methyluridine(2552) in 23S rRNA + S-adenosyl-L-homocysteine + H(+). Specifically methylates the uridine in position 2552 of 23S rRNA at the 2'-O position of the ribose in the fully assembled 50S ribosomal subunit. This is Ribosomal RNA large subunit methyltransferase E from Nitratidesulfovibrio vulgaris (strain DSM 19637 / Miyazaki F) (Desulfovibrio vulgaris).